The sequence spans 399 residues: Bombesin receptor subtype-3 (399 aa).

At 1-41 (MSQRQSQSPNQTLISITNDTETSSSVVSNDTTHKGWTGDNS) the chain is on the extracellular side. 3 N-linked (GlcNAc...) asparagine glycosylation sites follow: Asn-10, Asn-18, and Asn-29. The helical transmembrane segment at 42-63 (PGIEALCAIYITYAGIISVGIL) threads the bilayer. Over 64–82 (GNAILIKVFFKTKSMQTVP) the chain is Cytoplasmic. A helical transmembrane segment spans residues 83 to 103 (NIFITSLAFGDLLLLLTCVPV). The Extracellular portion of the chain corresponds to 104–121 (DATHYLAEGWLFGKVGCK). Residues Cys-120 and Cys-203 are joined by a disulfide bond. A helical transmembrane segment spans residues 122-143 (VLSFIRLTSVGVSVFTLTILSA). Residues 144-163 (DRYKAVVKPLERQPPNAILK) lie on the Cytoplasmic side of the membrane. A helical membrane pass occupies residues 164–184 (TCAKAGGIWIVSMIFALPEAI). The Extracellular portion of the chain corresponds to 185-220 (FSNVYTFQDPNRNVTFESCNSYPISERLLQEIHSLL). Residues 221-241 (CFLVFYIIPLSIISVYYSLIA) traverse the membrane as a helical segment. Over 242–272 (RTLYKSTLNIPTEEQSHARKQIESRKRIAKT) the chain is Cytoplasmic. Residues 273–293 (VLVLVALFALCWLPNHLLYLY) traverse the membrane as a helical segment. Residues 294-313 (HSFTYESYANHSDVPFVIII) lie on the Extracellular side of the membrane. The helical transmembrane segment at 314 to 333 (FSRVLAFSNSCVNPFALYWL) threads the bilayer. The Cytoplasmic portion of the chain corresponds to 334-399 (SKTFQQHFKA…SSAKKGEDKV (66 aa)). Residue Cys-347 is the site of S-palmitoyl cysteine attachment.

Belongs to the G-protein coupled receptor 1 family. In terms of assembly, interacts with C6orf89.

Its subcellular location is the cell membrane. Its function is as follows. Role in sperm cell division, maturation, or function. This receptor mediates its action by association with G proteins that activate a phosphatidylinositol-calcium second messenger system. The chain is Bombesin receptor subtype-3 (Brs3) from Mus musculus (Mouse).